Here is a 20-residue protein sequence, read N- to C-terminus: Equinatoxin-1 (20 aa).

Positions 3–12 are plays an important role in the hemolytic activity; the sequence is AVAGAVIEGA. An N-terminal region region spans residues 11-20; it reads GASLTFNVLQ.

It belongs to the actinoporin family. Sea anemone subfamily. As to quaternary structure, octamer or nonamer in membranes. Monomer in the soluble state.

The protein localises to the secreted. It is found in the nematocyst. Its subcellular location is the target cell membrane. Pore-forming protein that forms cations-selective hydrophilic pores of around 1 nm and causes cardiac stimulation and cytolysis. Pore formation is a multi-step process that involves specific recognition of membrane sphingomyelin (but neither cholesterol nor phosphatidylcholine) using aromatic rich region and adjacent phosphocholine (POC) binding site, firm binding to the membrane (mainly driven by hydrophobic interactions) accompanied by the transfer of the N-terminal region to the lipid-water interface and finally pore formation after oligomerization of monomers. Cytolytic effects include red blood cells hemolysis, platelet aggregation and lysis, cytotoxic and cytostatic effects on fibroblasts. Lethality in mammals has been ascribed to severe vasospasm of coronary vessels, cardiac arrhythmia, and inotropic effects. This is Equinatoxin-1 from Actinia equina (Beadlet anemone).